The chain runs to 88 residues: Mitochondrial import inner membrane translocase subunit TIM8 (88 aa).

The Twin CX3C motif signature appears at 44 to 70 (CFKKCNKDKPITSATLDGQEEACLKNC). 2 disulfides stabilise this stretch: cysteine 44/cysteine 70 and cysteine 48/cysteine 66.

The protein belongs to the small Tim family. Heterohexamer; composed of 3 copies of TIM8 and 3 copies of TIM13, named soluble 70 kDa complex. Associates with the TIM22 complex, whose core is composed of TIM22 and TIM54. Interacts with the transmembrane regions of multi-pass transmembrane proteins in transit.

It localises to the mitochondrion inner membrane. In terms of biological role, mitochondrial intermembrane chaperone that participates in the import and insertion of some multi-pass transmembrane proteins into the mitochondrial inner membrane. Also required for the transfer of beta-barrel precursors from the TOM complex to the sorting and assembly machinery (SAM complex) of the outer membrane. Acts as a chaperone-like protein that protects the hydrophobic precursors from aggregation and guide them through the mitochondrial intermembrane space. The TIM8-TIM13 complex is non essential and only mediates the import of few proteins, while the predominant TIM9-TIM10 70 kDa complex is crucial and mediates the import of much more proteins. The sequence is that of Mitochondrial import inner membrane translocase subunit TIM8 (TIM8) from Candida albicans (strain SC5314 / ATCC MYA-2876) (Yeast).